We begin with the raw amino-acid sequence, 266 residues long: Gasdermin bGSDM (266 aa).

The next 4 membrane-spanning stretches (beta stranded) occupy residues Leu67–Ile83, Lys95–Gln113, Ser162–Ala179, and Ala187–Tyr203.

Belongs to the bacterial gasdermin family. As to quaternary structure, monomer. In terms of assembly, forms large, homooligomeric ring-shaped pores when inserted in membranes.

Its subcellular location is the cytoplasm. It is found in the cell inner membrane. The full-length protein before cleavage is inactive: intramolecular interactions between the N-terminal domain and the C-terminal region mediate autoinhibition. The pyroptosis-like-inducing activity is carried by the released N-terminal domain (Gasdermin bGSDM, N-terminus). In terms of biological role, precursor of a pore-forming protein involved in defense against bacteriophages. Expression of bGSDM and the neighboring protease gene (Gilli_2517) is not toxic in E.coli. Cleavage of this precursor by its dedicated protease releases the active moiety (gasdermin bGSDM, N-terminus) which inserts into membranes, forming pores and triggering cell death. Pore-forming protein that causes membrane permeabilization via a pyroptosis-like activity. Makes ring-like pores when released. This is Gasdermin bGSDM from Gillisia limnaea (strain DSM 15749 / LMG 21470 / R-8282).